The primary structure comprises 509 residues: Maturase K (509 aa).

This sequence belongs to the intron maturase 2 family. MatK subfamily.

It is found in the plastid. In terms of biological role, usually encoded in the trnK tRNA gene intron. Probably assists in splicing its own and other chloroplast group II introns. This Cuscuta reflexa (Southern Asian dodder) protein is Maturase K.